A 77-amino-acid polypeptide reads, in one-letter code: uncharacterized protein (77 aa).

A helical transmembrane segment spans residues 13–33; that stretch reads VPVIRLSVFLHFFFVFPFCLL.

It is found in the membrane. This is an uncharacterized protein from Saccharomyces cerevisiae (strain ATCC 204508 / S288c) (Baker's yeast).